The chain runs to 513 residues: UDP-N-acetylmuramyl-tripeptide synthetase (513 aa).

Position 38 (serine 38) interacts with UDP-N-acetyl-alpha-D-muramoyl-L-alanyl-D-glutamate. 115 to 121 (GTKGKTT) is an ATP binding site. UDP-N-acetyl-alpha-D-muramoyl-L-alanyl-D-glutamate contacts are provided by residues 161–162 (TT), serine 188, and arginine 196. Lysine 230 is subject to N6-carboxylysine.

It belongs to the MurCDEF family. MurE subfamily. Post-translationally, carboxylation is probably crucial for Mg(2+) binding and, consequently, for the gamma-phosphate positioning of ATP.

Its subcellular location is the cytoplasm. The protein operates within cell wall biogenesis; peptidoglycan biosynthesis. Catalyzes the addition of an amino acid to the nucleotide precursor UDP-N-acetylmuramoyl-L-alanyl-D-glutamate (UMAG) in the biosynthesis of bacterial cell-wall peptidoglycan. The protein is UDP-N-acetylmuramyl-tripeptide synthetase of Latilactobacillus sakei subsp. sakei (strain 23K) (Lactobacillus sakei subsp. sakei).